A 242-amino-acid chain; its full sequence is Glutathione S-transferase 3 (242 aa).

Positions 1 to 79 (MIVLHHLKNS…HLVRKYGPSF (79 aa)) constitute a GST N-terminal domain. The GST C-terminal domain maps to 85–234 (DVAELEKYEL…ERYSHPPTPP (150 aa)). Ser228 bears the Phosphoserine mark. Residue Thr232 is modified to Phosphothreonine.

Belongs to the GST superfamily. As to quaternary structure, interacts with sad1.

The protein resides in the cytoplasm. The enzyme catalyses RX + glutathione = an S-substituted glutathione + a halide anion + H(+). Its function is as follows. May have a role in the detoxification of various heavy metals. This is Glutathione S-transferase 3 (gst3) from Schizosaccharomyces pombe (strain 972 / ATCC 24843) (Fission yeast).